A 265-amino-acid polypeptide reads, in one-letter code: Cytochrome b-c1 complex subunit Rieske, mitochondrial (265 aa).

The N-terminal 53 residues, 1–53 (MLRVAGRRLSSSAARSSSTFFTRSSFTVTDDSSPARSPSPSLTSSFLDQIRGF), are a transit peptide targeting the mitochondrion. Residues 54–102 (SSNSVSPAHQLGLVSDLPATVAAIKNPSSKIVYDDSNHERYPPGDPSKR) are Mitochondrial matrix-facing. A helical membrane pass occupies residues 103-125 (AFAYFVLTGGRFVYASSVRLLIL). Topologically, residues 126–265 (KFVLSMSASK…FLEENKLLIG (140 aa)) are mitochondrial intermembrane. Residues 175–263 (IKLANSVDLG…YSFLEENKLL (89 aa)) form the Rieske domain. [2Fe-2S] cluster contacts are provided by cysteine 208, histidine 210, cysteine 227, and histidine 230. A disulfide bond links cysteine 213 and cysteine 229.

It belongs to the Rieske iron-sulfur protein family. Component of the ubiquinol-cytochrome c oxidoreductase (cytochrome b-c1 complex, complex III, CIII), a multisubunit enzyme composed of 3 respiratory subunits cytochrome b, cytochrome c1 and Rieske protein, 2 core protein subunits, and several low-molecular weight protein subunits. The complex exists as an obligatory dimer and forms supercomplexes (SCs) in the inner mitochondrial membrane with cytochrome c oxidase (complex IV, CIV). It depends on [2Fe-2S] cluster as a cofactor.

The protein resides in the mitochondrion inner membrane. It catalyses the reaction a quinol + 2 Fe(III)-[cytochrome c](out) = a quinone + 2 Fe(II)-[cytochrome c](out) + 2 H(+)(out). In terms of biological role, component of the ubiquinol-cytochrome c oxidoreductase, a multisubunit transmembrane complex that is part of the mitochondrial electron transport chain which drives oxidative phosphorylation. The respiratory chain contains 3 multisubunit complexes succinate dehydrogenase (complex II, CII), ubiquinol-cytochrome c oxidoreductase (cytochrome b-c1 complex, complex III, CIII) and cytochrome c oxidase (complex IV, CIV), that cooperate to transfer electrons derived from NADH and succinate to molecular oxygen, creating an electrochemical gradient over the inner membrane that drives transmembrane transport and the ATP synthase. The cytochrome b-c1 complex catalyzes electron transfer from ubiquinol to cytochrome c, linking this redox reaction to translocation of protons across the mitochondrial inner membrane, with protons being carried across the membrane as hydrogens on the quinol. In the process called Q cycle, 2 protons are consumed from the matrix, 4 protons are released into the intermembrane space and 2 electrons are passed to cytochrome c. The Rieske protein is a catalytic core subunit containing a [2Fe-2S] iron-sulfur cluster. It cycles between 2 conformational states during catalysis to transfer electrons from the quinol bound in the Q(0) site in cytochrome b to cytochrome c1. The sequence is that of Cytochrome b-c1 complex subunit Rieske, mitochondrial (FES1) from Solanum tuberosum (Potato).